A 351-amino-acid chain; its full sequence is Holliday junction branch migration complex subunit RuvB (351 aa).

The tract at residues 4–185 (HDRELVSPEA…FGFVAHMDFY (182 aa)) is large ATPase domain (RuvB-L). Residues Leu-24, Arg-25, Gly-66, Lys-69, Thr-70, Thr-71, 132–134 (EDF), Arg-175, Tyr-185, and Arg-222 each bind ATP. Thr-70 contributes to the Mg(2+) binding site. The interval 186-256 (SPEELELILH…CARAALSLYE (71 aa)) is small ATPAse domain (RuvB-S). Residues 259–351 (DEGLDRLDRA…AALFDPDEEP (93 aa)) form a head domain (RuvB-H) region. Positions 314 and 319 each coordinate DNA.

It belongs to the RuvB family. Homohexamer. Forms an RuvA(8)-RuvB(12)-Holliday junction (HJ) complex. HJ DNA is sandwiched between 2 RuvA tetramers; dsDNA enters through RuvA and exits via RuvB. An RuvB hexamer assembles on each DNA strand where it exits the tetramer. Each RuvB hexamer is contacted by two RuvA subunits (via domain III) on 2 adjacent RuvB subunits; this complex drives branch migration. In the full resolvosome a probable DNA-RuvA(4)-RuvB(12)-RuvC(2) complex forms which resolves the HJ.

The protein localises to the cytoplasm. It catalyses the reaction ATP + H2O = ADP + phosphate + H(+). Its function is as follows. The RuvA-RuvB-RuvC complex processes Holliday junction (HJ) DNA during genetic recombination and DNA repair, while the RuvA-RuvB complex plays an important role in the rescue of blocked DNA replication forks via replication fork reversal (RFR). RuvA specifically binds to HJ cruciform DNA, conferring on it an open structure. The RuvB hexamer acts as an ATP-dependent pump, pulling dsDNA into and through the RuvAB complex. RuvB forms 2 homohexamers on either side of HJ DNA bound by 1 or 2 RuvA tetramers; 4 subunits per hexamer contact DNA at a time. Coordinated motions by a converter formed by DNA-disengaged RuvB subunits stimulates ATP hydrolysis and nucleotide exchange. Immobilization of the converter enables RuvB to convert the ATP-contained energy into a lever motion, pulling 2 nucleotides of DNA out of the RuvA tetramer per ATP hydrolyzed, thus driving DNA branch migration. The RuvB motors rotate together with the DNA substrate, which together with the progressing nucleotide cycle form the mechanistic basis for DNA recombination by continuous HJ branch migration. Branch migration allows RuvC to scan DNA until it finds its consensus sequence, where it cleaves and resolves cruciform DNA. This is Holliday junction branch migration complex subunit RuvB from Thermobifida fusca (strain YX).